Reading from the N-terminus, the 711-residue chain is Long-chain-fatty-acid--CoA ligase 4 (711 aa).

Residues leucine 8–isoleucine 28 traverse the membrane as a helical; Signal-anchor for type III membrane protein segment. At proline 29–lysine 711 the chain is on the cytoplasmic side. Serine 447 bears the Phosphoserine mark.

This sequence belongs to the ATP-dependent AMP-binding enzyme family. It depends on Mg(2+) as a cofactor.

It is found in the mitochondrion outer membrane. The protein localises to the peroxisome membrane. It localises to the microsome membrane. The protein resides in the endoplasmic reticulum membrane. Its subcellular location is the cell membrane. It carries out the reaction a long-chain fatty acid + ATP + CoA = a long-chain fatty acyl-CoA + AMP + diphosphate. It catalyses the reaction (5Z,8Z,11Z,14Z)-eicosatetraenoate + ATP + CoA = (5Z,8Z,11Z,14Z)-eicosatetraenoyl-CoA + AMP + diphosphate. The enzyme catalyses hexadecanoate + ATP + CoA = hexadecanoyl-CoA + AMP + diphosphate. The catalysed reaction is (E)-hexadec-2-enoate + ATP + CoA = (2E)-hexadecenoyl-CoA + AMP + diphosphate. It carries out the reaction 15-hydroxy-(5Z,8Z,11Z,13E)-eicosatetraenoate + ATP + CoA = 15-hydroxy-(5Z,8Z,11Z,13E)-eicosatetraenoyl-CoA + AMP + diphosphate. It catalyses the reaction 12-hydroxy-(5Z,8Z,10E,14Z)-eicosatetraenoate + ATP + CoA = 12-hydroxy-(5Z,8Z,10E,14Z)-eicosatetraenoyl-CoA + AMP + diphosphate. The enzyme catalyses 5-hydroxy-(6E,8Z,11Z,14Z)-eicosatetraenoate + ATP + CoA = 5-hydroxy-(6E,8Z,11Z,14Z)-eicosatetraenoyl-CoA + AMP + diphosphate. The catalysed reaction is 5,6-epoxy-(8Z,11Z,14Z)-eicosatrienoate + ATP + CoA = 5,6-epoxy-(8Z,11Z,14Z)-eicosatrienoyl-CoA + AMP + diphosphate. It carries out the reaction 14,15-epoxy-(5Z,8Z,11Z)-eicosatrienoate + ATP + CoA = 14,15-epoxy-(5Z,8Z,11Z)-eicosatrienoyl-CoA + AMP + diphosphate. It catalyses the reaction 11,12-epoxy-(5Z,8Z,14Z)-eicosatrienoate + ATP + CoA = 11,12-epoxy-(5Z,8Z,14Z)-eicosatrienoyl-CoA + AMP + diphosphate. The enzyme catalyses 8,9-epoxy-(5Z,11Z,14Z)-eicosatrienoate + ATP + CoA = 8,9-epoxy-(5Z,11Z,14Z)-eicosatrienoyl-CoA + AMP + diphosphate. Its activity is regulated as follows. Both triacsin C and rosiglitazone inhibit arachidonoyl-CoA ligase activity. In terms of biological role, catalyzes the conversion of long-chain fatty acids to their active form acyl-CoA for both synthesis of cellular lipids, and degradation via beta-oxidation. Preferentially activates arachidonate and eicosapentaenoate as substrates. Preferentially activates 8,9-EET &gt; 14,15-EET &gt; 5,6-EET &gt; 11,12-EET. Modulates glucose-stimulated insulin secretion by regulating the levels of unesterified EETs. Modulates prostaglandin E2 secretion. This Homo sapiens (Human) protein is Long-chain-fatty-acid--CoA ligase 4 (ACSL4).